Reading from the N-terminus, the 309-residue chain is Mitochondrial import receptor subunit TOM34 (309 aa).

The residue at position 8 (Ser-8) is a Phosphoserine. TPR repeat units follow at residues 9 to 42 (VEQLRAAGNQNFRNGQYGEASALYERALRLLQAR), 51 to 84 (SVLYSNRAACYLKDGNCTDCIKDCTSALALVPFS), and 86 to 118 (KPLLRRASAYEALEKYSLAYVDYKTVLQIDNSV). The interval 158-187 (WSSLPSENHKETAKSKSKETTATKNRVPSA) is disordered. Ser-160 carries the phosphoserine modification. Over residues 164–178 (ENHKETAKSKSKETT) the composition is skewed to basic and acidic residues. A Phosphoserine modification is found at Ser-186. TPR repeat units follow at residues 193 to 226 (ARVLKEEGNELVKKGNHKKAIEKYSESLLFSSLE), 227 to 260 (SATYSNRALCHLVLKQYKEAEKDCTEALKLDGKN), and 262 to 294 (KAFYRRAQAYKALKDYKSSLADISSLLQIEPRN). A Glycyl lysine isopeptide (Lys-Gly) (interchain with G-Cter in SUMO2) cross-link involves residue Lys-197.

This sequence belongs to the Tom34 family. As to quaternary structure, interacts with HSP90A, VCP, ATP6V1D, KIAA0665, AMPK, and DMAP1 through its TPR repeat.

The protein localises to the cytoplasm. It localises to the mitochondrion outer membrane. Functionally, plays a role in the import of cytosolically synthesized preproteins into mitochondria. Binds the mature portion of precursor proteins. Interacts with cellular components, and possesses weak ATPase activity. May be a chaperone-like protein that helps to keep newly synthesized precursors in an unfolded import compatible state. This chain is Mitochondrial import receptor subunit TOM34 (Tomm34), found in Rattus norvegicus (Rat).